The sequence spans 83 residues: U5-theraphotoxin-Hs1c (83 aa).

A signal peptide spans 1 to 21 (MKTSMFLTLTGLVLLFVVCYA). A propeptide spanning residues 22–49 (SESEEKEFPKELLSSIFAADSDFKVEER) is cleaved from the precursor. Disulfide bonds link Cys51–Cys63, Cys56–Cys68, and Cys62–Cys75.

The protein belongs to the neurotoxin 10 (Hwtx-1) family. 51 (Hntx-8) subfamily. Hntx-8 sub-subfamily. As to expression, expressed by the venom gland.

It localises to the secreted. Agglutinates erythrocytes. The sequence is that of U5-theraphotoxin-Hs1c from Cyriopagopus schmidti (Chinese bird spider).